Reading from the N-terminus, the 165-residue chain is Mid1-interacting protein 1-like (165 aa).

The segment at 46–67 (DQESHASVSHNNNNNNEPSFPN) is disordered.

The protein belongs to the SPOT14 family.

The protein resides in the nucleus. The protein localises to the cytoplasm. Its subcellular location is the cytoskeleton. Its function is as follows. Involved in stabilization of microtubules. May play a role in the regulation of lipogenesis. The polypeptide is Mid1-interacting protein 1-like (Danio rerio (Zebrafish)).